A 412-amino-acid polypeptide reads, in one-letter code: Peptidase T (412 aa).

His84 serves as a coordination point for Zn(2+). Asp86 is a catalytic residue. Asp146 is a binding site for Zn(2+). The Proton acceptor role is filled by Glu179. Zn(2+) is bound by residues Glu180, Asp202, and His385.

The protein belongs to the peptidase M20B family. Zn(2+) is required as a cofactor.

The protein localises to the cytoplasm. The enzyme catalyses Release of the N-terminal residue from a tripeptide.. Cleaves the N-terminal amino acid of tripeptides. This Haemophilus influenzae (strain 86-028NP) protein is Peptidase T.